The chain runs to 805 residues: Mediator of RNA polymerase II transcription subunit 25 (805 aa).

Disordered stretches follow at residues 308–332 (NQMP…PQNT) and 647–691 (QQPQ…NPQL). Low complexity predominate over residues 647 to 678 (QQPQQAASQAPPQATQTTVQAPGQPQNPQPGA). An LXXLL motif motif is present at residues 691 to 695 (LRNLL).

It belongs to the Mediator complex subunit 25 family. Component of the Mediator complex.

The protein resides in the nucleus. Its function is as follows. Component of the Mediator complex, a coactivator involved in the regulated transcription of nearly all RNA polymerase II-dependent genes. Mediator functions as a bridge to convey information from gene-specific regulatory proteins to the basal RNA polymerase II transcription machinery. Mediator is recruited to promoters by direct interactions with regulatory proteins and serves as a scaffold for the assembly of a functional preinitiation complex with RNA polymerase II and the general transcription factors. In Xenopus tropicalis (Western clawed frog), this protein is Mediator of RNA polymerase II transcription subunit 25 (med25).